Here is a 284-residue protein sequence, read N- to C-terminus: Ribosomal RNA small subunit methyltransferase A (284 aa).

Residues N27, L29, G54, E75, D100, and N125 each contribute to the S-adenosyl-L-methionine site.

The protein belongs to the class I-like SAM-binding methyltransferase superfamily. rRNA adenine N(6)-methyltransferase family. RsmA subfamily.

It localises to the cytoplasm. It carries out the reaction adenosine(1518)/adenosine(1519) in 16S rRNA + 4 S-adenosyl-L-methionine = N(6)-dimethyladenosine(1518)/N(6)-dimethyladenosine(1519) in 16S rRNA + 4 S-adenosyl-L-homocysteine + 4 H(+). Its function is as follows. Specifically dimethylates two adjacent adenosines (A1518 and A1519) in the loop of a conserved hairpin near the 3'-end of 16S rRNA in the 30S particle. May play a critical role in biogenesis of 30S subunits. The sequence is that of Ribosomal RNA small subunit methyltransferase A from Protochlamydia amoebophila (strain UWE25).